The primary structure comprises 447 residues: ATP-dependent protease ATPase subunit HslU (447 aa).

ATP-binding positions include Ile17 and 59–64 (GVGKTE). The disordered stretch occupies residues 136-160 (PPARGGFQGEPTAEEKPTEKKESAT). Residues 148-159 (AEEKPTEKKESA) show a composition bias toward basic and acidic residues. Residues Asp260, Glu325, and Arg397 each coordinate ATP.

It belongs to the ClpX chaperone family. HslU subfamily. A double ring-shaped homohexamer of HslV is capped on each side by a ring-shaped HslU homohexamer. The assembly of the HslU/HslV complex is dependent on binding of ATP.

It localises to the cytoplasm. In terms of biological role, ATPase subunit of a proteasome-like degradation complex; this subunit has chaperone activity. The binding of ATP and its subsequent hydrolysis by HslU are essential for unfolding of protein substrates subsequently hydrolyzed by HslV. HslU recognizes the N-terminal part of its protein substrates and unfolds these before they are guided to HslV for hydrolysis. The polypeptide is ATP-dependent protease ATPase subunit HslU (Coxiella burnetii (strain Dugway 5J108-111)).